We begin with the raw amino-acid sequence, 761 residues long: Copper-exporting P-type ATPase (761 aa).

N-acetylthreonine is present on threonine 2. An HMA domain is found at 14-78 (QRIQLRISGM…AVRRAGYQAD (65 aa)). The Cu(+) site is built by cysteine 25 and cysteine 28. The next 6 helical transmembrane spans lie at 102–122 (LAIAAVLFVPVADLSVMFGVV), 129–149 (GWQWVLSALALPVVTWAAWPF), 164–184 (METLISVGITAATIWSLYTVF), 199–219 (LLGSDAIYFEVAAGVTVFVLV), 361–381 (VFVPAVLVIAALTAAGWLIAG), and 387–407 (AVSAALAVLVIACPCALGLAT). Aspartate 443 serves as the catalytic 4-aspartylphosphate intermediate. The next 2 membrane-spanning stretches (helical) occupy residues 695-714 (MVWAFGYNIAAIPVAAAGLL) and 718-735 (VAGAAMAFSSFFVVSNSL).

Belongs to the cation transport ATPase (P-type) (TC 3.A.3) family. Type IB subfamily.

It is found in the cell membrane. It catalyses the reaction Cu(+)(in) + ATP + H2O = Cu(+)(out) + ADP + phosphate + H(+). With respect to regulation, ATPase activity is stimulated by Cu(+) ions. In terms of biological role, involved in copper export. Could be involved in the copper detoxification of mycobacterial cells. The polypeptide is Copper-exporting P-type ATPase (ctpA) (Mycobacterium tuberculosis (strain ATCC 25618 / H37Rv)).